The chain runs to 374 residues: Multicilin (374 aa).

Disordered stretches follow at residues 18–72 (CPNR…ALPA) and 84–105 (CSSF…QSHS). Residues 168-216 (EQYWKEVADQNQRALGDALIENNQLHATLTQKQEEIASLKERNLQLKEL) adopt a coiled-coil conformation. The segment at 284 to 306 (LQSRDPKRLRLQPEPQSLDRRPG) is disordered.

This sequence belongs to the geminin family. Heterodimer (via coiled-coil domain) with GMNN (via coiled-coil domain); targets GMNN to the nucleus. Can form homodimers (in vitro, via coiled-coil domain), but these are much less stable than the heterodimer formed with GMNN.

It localises to the nucleus. Transcription regulator specifically required for multiciliate cell differentiation. Acts in a multiprotein complex containing E2F4 and E2F5 that binds and activates genes required for centriole biogenesis. Required for the deuterosome-mediated acentriolar pathway. Plays a role in mitotic cell cycle progression by promoting cell cycle exit. Modulates GMNN activity by reducing its affinity for CDT1. This Bos taurus (Bovine) protein is Multicilin (MCIDAS).